Reading from the N-terminus, the 226-residue chain is Ribonuclease HII (226 aa).

In terms of domain architecture, RNase H type-2 spans 24–216; that stretch reads QRLCGVDEAG…VRKVLERGMV (193 aa). Residues Asp30, Glu31, and Asp125 each coordinate a divalent metal cation.

Belongs to the RNase HII family. Mn(2+) serves as cofactor. Requires Mg(2+) as cofactor.

Its subcellular location is the cytoplasm. The catalysed reaction is Endonucleolytic cleavage to 5'-phosphomonoester.. In terms of biological role, endonuclease that specifically degrades the RNA of RNA-DNA hybrids. The protein is Ribonuclease HII of Cupriavidus metallidurans (strain ATCC 43123 / DSM 2839 / NBRC 102507 / CH34) (Ralstonia metallidurans).